We begin with the raw amino-acid sequence, 147 residues long: Large ribosomal subunit protein uL15 (147 aa).

The disordered stretch occupies residues 1–42 (MTIKLHHLRPAPGSKSNKIRVGRGEGGKRGKTAGRGTKGTKA).

The protein belongs to the universal ribosomal protein uL15 family. In terms of assembly, part of the 50S ribosomal subunit.

Binds to the 23S rRNA. The sequence is that of Large ribosomal subunit protein uL15 from Rhodococcus erythropolis (strain PR4 / NBRC 100887).